A 204-amino-acid polypeptide reads, in one-letter code: GATA transcription factor 14 (204 aa).

A compositionally biased stretch (basic and acidic residues) spans 57-66 (REFDTNDSKP). Residues 57 to 102 (REFDTNDSKPSRNFSNLPTATRGRLHAPKRSGNKRGRQKRLSFKSP) form a disordered region. A compositionally biased stretch (basic residues) spans 79–98 (GRLHAPKRSGNKRGRQKRLS). A GATA-type zinc finger spans residues 111–165 (GITDKSCSHCGTRKTPLWREGPRGAGTLCNACGMRYRTGRLLPEYRPASSPDFKP). Positions 180–204 (RERKSSPPNSFGFSESYHSTRKLGF) are disordered. Over residues 185-196 (SPPNSFGFSESY) the composition is skewed to polar residues.

This sequence belongs to the type IV zinc-finger family. Class A subfamily.

The protein localises to the nucleus. In terms of biological role, transcriptional activator that specifically binds 5'-GATA-3' or 5'-GAT-3' motifs within gene promoters. May be involved in the regulation of some light-responsive genes. This Arabidopsis thaliana (Mouse-ear cress) protein is GATA transcription factor 14 (GATA14).